The primary structure comprises 205 residues: Small ribosomal subunit protein uS4 (205 aa).

The interval 18–46 is disordered; sequence NIWGRPKSPVNRREYGPGQHGQRRKGKLS. The S4 RNA-binding domain maps to 94–154; that stretch reads RRLDTVVFRA…EASKQLAVVL (61 aa).

The protein belongs to the universal ribosomal protein uS4 family. Part of the 30S ribosomal subunit. Contacts protein S5. The interaction surface between S4 and S5 is involved in control of translational fidelity.

Its function is as follows. One of the primary rRNA binding proteins, it binds directly to 16S rRNA where it nucleates assembly of the body of the 30S subunit. Functionally, with S5 and S12 plays an important role in translational accuracy. This chain is Small ribosomal subunit protein uS4, found in Bradyrhizobium sp. (strain ORS 278).